A 161-amino-acid polypeptide reads, in one-letter code: Short form salivary protein D7S (161 aa).

A signal peptide spans 1-18 (MKFPSILLAILLFKPITA). Disulfide bonds link Cys33–Cys67, Cys47–Cys155, and Cys109–Cys125.

Belongs to the PBP/GOBP family.

Its subcellular location is the secreted. Functionally, in contrast to the related D7 salivary proteins, does not bind serotonin. The protein is Short form salivary protein D7S of Culex quinquefasciatus (Southern house mosquito).